We begin with the raw amino-acid sequence, 84 residues long: Toxin-like TcoNTxP1 (84 aa).

An N-terminal signal peptide occupies residues 1–19 (MKRMILFTSCLLLIDIVVG). The LCN-type CS-alpha/beta domain occupies 21–82 (KEGYPADSKG…VWDSATNKCG (62 aa)). 4 disulfides stabilise this stretch: C31-C81, C35-C57, C43-C62, and C47-C64. C81 bears the Cysteine amide mark. Positions 82-84 (GKK) are excised as a propeptide.

In terms of tissue distribution, expressed by the venom gland.

The protein resides in the secreted. In terms of biological role, this protein is not toxic. It induces an immune response similar to that induced by whole venom. Thus, polyclonal antibodies raised against this protein can neutralize the effects of the venom. This chain is Toxin-like TcoNTxP1, found in Tityus costatus (Brazilian scorpion).